A 296-amino-acid polypeptide reads, in one-letter code: Aspartate and glycine-rich protein (296 aa).

Over residues 1-77 (GDGENGNGNG…GNGNGNGNGN (77 aa)) the composition is skewed to gly residues. Disordered regions lie at residues 1-219 (GDGE…DNGG) and 233-296 (RARA…YTSY). Acidic residues-rich tracts occupy residues 80-96 (FDDDDWDDFDWDDDDWN) and 103-194 (NGDD…DDRW). Gly residues predominate over residues 198 to 210 (NGNGNGNGNGNGN). A compositionally biased stretch (low complexity) spans 233–243 (RARAAASAAGR). Gly residues predominate over residues 244-259 (SRGGSGGSGGSGGSGG). The segment covering 270–281 (RAFASARASSGN) has biased composition (low complexity).

As to expression, component of the acid-soluble and acid-insoluble organic matrix of calcified shell layers (at protein level).

The protein resides in the secreted. The chain is Aspartate and glycine-rich protein from Haliotis asinina (Donkey's ear abalone).